The sequence spans 259 residues: Pimeloyl-[acyl-carrier protein] methyl ester esterase (259 aa).

An AB hydrolase-1 domain is found at 15–242; it reads HLVLLHGWGL…AAHAPFISHP (228 aa). Substrate-binding positions include tryptophan 22, 82–83, and 143–147; these read SL and FLALQ. The Nucleophile role is filled by serine 82. Catalysis depends on residues aspartate 207 and histidine 235. Histidine 235 provides a ligand contact to substrate.

This sequence belongs to the AB hydrolase superfamily. Carboxylesterase BioH family. In terms of assembly, monomer.

It localises to the cytoplasm. It carries out the reaction 6-carboxyhexanoyl-[ACP] methyl ester + H2O = 6-carboxyhexanoyl-[ACP] + methanol + H(+). The protein operates within cofactor biosynthesis; biotin biosynthesis. Functionally, the physiological role of BioH is to remove the methyl group introduced by BioC when the pimeloyl moiety is complete. It allows to synthesize pimeloyl-ACP via the fatty acid synthetic pathway through the hydrolysis of the ester bonds of pimeloyl-ACP esters. In Cronobacter sakazakii (strain ATCC BAA-894) (Enterobacter sakazakii), this protein is Pimeloyl-[acyl-carrier protein] methyl ester esterase.